We begin with the raw amino-acid sequence, 378 residues long: Cysteine synthase (378 aa).

The disordered stretch occupies residues 10–31; sequence NSEGDSNQQQNNNNNSNNNLKE. A compositionally biased stretch (low complexity) spans 15-28; that stretch reads SNQQQNNNNNSNNN. An N6-(pyridoxal phosphate)lysine modification is found at K79. Pyridoxal 5'-phosphate-binding positions include 215–219 and S319; that span reads GTGGT.

Belongs to the cysteine synthase/cystathionine beta-synthase family. It depends on pyridoxal 5'-phosphate as a cofactor.

The enzyme catalyses O-acetyl-L-serine + hydrogen sulfide = L-cysteine + acetate. Its pathway is amino-acid biosynthesis; L-cysteine biosynthesis; L-cysteine from L-serine: step 2/2. This chain is Cysteine synthase (cysK), found in Dictyostelium discoideum (Social amoeba).